Consider the following 452-residue polypeptide: UDP-N-acetylmuramoylalanine--D-glutamate ligase (452 aa).

119–125 (GSNGKTT) is an ATP binding site.

The protein belongs to the MurCDEF family.

It is found in the cytoplasm. The catalysed reaction is UDP-N-acetyl-alpha-D-muramoyl-L-alanine + D-glutamate + ATP = UDP-N-acetyl-alpha-D-muramoyl-L-alanyl-D-glutamate + ADP + phosphate + H(+). It participates in cell wall biogenesis; peptidoglycan biosynthesis. In terms of biological role, cell wall formation. Catalyzes the addition of glutamate to the nucleotide precursor UDP-N-acetylmuramoyl-L-alanine (UMA). The protein is UDP-N-acetylmuramoylalanine--D-glutamate ligase of Streptococcus pyogenes serotype M4 (strain MGAS10750).